The following is a 126-amino-acid chain: Large ribosomal subunit protein uL22 (126 aa).

Belongs to the universal ribosomal protein uL22 family. In terms of assembly, part of the 50S ribosomal subunit.

In terms of biological role, this protein binds specifically to 23S rRNA; its binding is stimulated by other ribosomal proteins, e.g. L4, L17, and L20. It is important during the early stages of 50S assembly. It makes multiple contacts with different domains of the 23S rRNA in the assembled 50S subunit and ribosome. Its function is as follows. The globular domain of the protein is located near the polypeptide exit tunnel on the outside of the subunit, while an extended beta-hairpin is found that lines the wall of the exit tunnel in the center of the 70S ribosome. The chain is Large ribosomal subunit protein uL22 from Dinoroseobacter shibae (strain DSM 16493 / NCIMB 14021 / DFL 12).